The primary structure comprises 388 residues: Cell adhesion molecule 4 (388 aa).

The signal sequence occupies residues 1–20; the sequence is MGRARRFQWPLLLLWAAAAG. One can recognise an Ig-like V-type domain in the interval 21–119; it reads PGTGQEVQTE…DTHHQIATLT (99 aa). At 25-324 the chain is on the extracellular side; it reads QEVQTENVTV…VEAQTSVPYA (300 aa). Asparagine 31 and asparagine 67 each carry an N-linked (GlcNAc...) asparagine glycan. Intrachain disulfides connect cysteine 44–cysteine 104, cysteine 145–cysteine 199, and cysteine 245–cysteine 291. Ig-like C2-type domains lie at 124 to 219 and 224 to 307; these read PENP…YVLD and PTAR…YVLV. The N-linked (GlcNAc...) asparagine glycan is linked to asparagine 286. Residues 325-345 form a helical membrane-spanning segment; sequence IVGGILALLVFLIICVLVGMV. Residues 346-388 are Cytoplasmic-facing; the sequence is WCSVRQKGSYLTHEASGLDEQGEAREAFLNGGDGHKRKEEFFI. Residue serine 361 is modified to Phosphoserine.

This sequence belongs to the nectin family. In terms of assembly, monomer and homodimer. In terms of processing, N-glycosylated. As to expression, expressed in the brain and several organs including the kidney and liver.

The protein localises to the membrane. In terms of biological role, involved in the cell-cell adhesion. Has calcium- and magnesium-independent cell-cell adhesion activity. May have tumor-suppressor activity. The polypeptide is Cell adhesion molecule 4 (Cadm4) (Mus musculus (Mouse)).